A 505-amino-acid polypeptide reads, in one-letter code: MGSGPLSLPLALSPPRLLLLLLLSLLPVARASEAEHRLFERLFEDYNEIIRPVANVSDPVIIHFEVSMSQLVKVDEVNQIMETNLWLKQIWNDYKLKWNPSDYGGAEFMRVPAQKIWKPDIVLYNNAVGDFQVDDKTKALLKYTGEVTWIPPAIFKSSCKIDVTYFPFDYQNCTMKFGSWSYDKAKIDLVLIGSSMNLKDYWESGEWAIIKAPGYKHDIKYNCCEEIYPDITYSLYIRRLPLFYTINLIIPCLLISFLTVLVFYLPSDCGEKVTLCISVLLSLTVFLLVITETIPSTSLVIPLIGEYLLFTMIFVTLSIVITVFVLNVHYRTPTTHTMPSWVKTVFLNLLPRVMFMTRPTSNEGNAQKPRPLYGAELSNLNCFSRAESKGCKEGYPCQDGMCGYCHHRRIKISNFSANLTRSSSSESVDAVLSLSALSPEIKEAIQSVKYIAENMKAQNEAKEIQDDWKYVAMVIDRIFLWVFTLVCILGTAGLFLQPLMAREDA.

The first 31 residues, Met1–Ala31, serve as a signal peptide directing secretion. Over Ser32–Ile250 the chain is Extracellular. Asn55 and Asn172 each carry an N-linked (GlcNAc...) asparagine glycan. 2 disulfide bridges follow: Cys159/Cys173 and Cys223/Cys224. Residues Pro251–Pro266 traverse the membrane as a helical segment. Residues Ser267–Asp268 are Cytoplasmic-facing. Residues Cys269 to Val285 traverse the membrane as a helical segment. Over Phe286–Tyr307 the chain is Extracellular. The chain crosses the membrane as a helical span at residues Leu308–Leu326. The Cytoplasmic portion of the chain corresponds to Asn327–Val474. Ser413 and Ser416 each carry phosphoserine. A helical membrane pass occupies residues Ile475–Gly493. The Extracellular segment spans residues Leu494 to Ala505.

The protein belongs to the ligand-gated ion channel (TC 1.A.9) family. Acetylcholine receptor (TC 1.A.9.1) subfamily. Alpha-3/CHRNA3 sub-subfamily. In terms of assembly, neuronal AChR is composed of two different types of subunits: alpha and beta. CHRNA3/Alpha-3 subunit can be combined to CHRNA5/alpha-5, CHRNB2/beta-2 CHRNB3/beta-3 or CHRNB4/beta-4 to give rise to functional receptors. Forms stoichiometries such as (CHRNA3)2:(CHRNB4)3 or (CHRNA3:CHRNB4)2:CHRNB3. Part of a complex composed of STUB1/CHIP, VCP/p97, CHRNA3, and UBXN2A that modulates the ubiquitination and endoplasmic reticulum-associated degradation (ERAD) of CHRNA3. Within the complex UBXN2A acts as a scaffold protein required for the interaction of CHRNA3 with VCP/p97, this interaction also inhibits CHRNA3 ubiquitination by STUB1/CHIP and subsequently ERAD. Interacts with UBXN2A (via SEP domain), the interaction is required for the interaction of CHRNA3 in the STUB1:VCP:UBXN2A complex. Interacts with RIC3; which is required for proper folding and assembly. Interacts with LYPD6. Ubiquitinated; by STUB1/CHIP and thereafter degraded by the 26S proteosome complex.

The protein resides in the synaptic cell membrane. It localises to the cell membrane. The protein localises to the endoplasmic reticulum. It is found in the golgi apparatus. It catalyses the reaction Ca(2+)(in) = Ca(2+)(out). The catalysed reaction is K(+)(in) = K(+)(out). It carries out the reaction Na(+)(in) = Na(+)(out). Activated by a myriad of ligands such as acetylcholine, cytisine, nicotine, choline and epibatidine. The heteropentamer CHRNA3:CHRNB2 activity is blocked by alpha-conotoxins ImI, ImII, PnIA, GID and MII. The heteropentamer CHRNA3:CHRNB4 activity is blocked by the alpha-conotoxin ImI and AuIB. In terms of biological role, component of neuronal acetylcholine receptors (nAChRs) that function as pentameric, ligand-gated cation channels with high calcium permeability among other activities. nAChRs are excitatory neurotrasnmitter receptors formed by a collection of nAChR subunits known to mediate synaptic transmission in the nervous system and the neuromuscular junction. Each nAchR subunit confers differential attributes to channel properties, including activation, deactivation and desensitization kinetics, pH sensitivity, cation permeability, and binding to allosteric modulators. CHRNA3 forms heteropentameric neuronal acetylcholine receptors with CHRNB2 and CHRNB4, with CHRNA5, and CHRNB3 as accesory subunits. CHRNA3:CHRNB4 being predominant in neurons of the autonomic ganglia, it is known as ganglionic nicotinic receptor. CHRNA3:CHRNB4 or CHRNA3:CHRNA5:CHRNB4 play also an important role in the habenulo-interpeduncular tract, modulating the mesolimbic dopamine system and affecting reward circuits and addiction. Hypothalamic CHRNA3:CHRNB4 nAChR activation by nicotine leads to activation of POMC neurons and a decrease in food intake. Also expressed in the urothelium where it modulates reflex bladder activity by increasing intracellular calcium through extracellular influx and basal ATP release. The sequence is that of Neuronal acetylcholine receptor subunit alpha-3 from Homo sapiens (Human).